We begin with the raw amino-acid sequence, 99 residues long: Large ribosomal subunit protein uL23 (99 aa).

It belongs to the universal ribosomal protein uL23 family. Part of the 50S ribosomal subunit. Contacts protein L29, and trigger factor when it is bound to the ribosome.

In terms of biological role, one of the early assembly proteins it binds 23S rRNA. One of the proteins that surrounds the polypeptide exit tunnel on the outside of the ribosome. Forms the main docking site for trigger factor binding to the ribosome. This chain is Large ribosomal subunit protein uL23, found in Streptococcus suis (strain 98HAH33).